Reading from the N-terminus, the 70-residue chain is Small ribosomal subunit protein bS21A (70 aa).

Belongs to the bacterial ribosomal protein bS21 family.

The polypeptide is Small ribosomal subunit protein bS21A (rpsU1) (Burkholderia mallei (strain ATCC 23344)).